Reading from the N-terminus, the 54-residue chain is Large ribosomal subunit protein bL32c (54 aa).

The protein belongs to the bacterial ribosomal protein bL32 family.

It localises to the plastid. Its subcellular location is the chloroplast. The chain is Large ribosomal subunit protein bL32c from Lactuca sativa (Garden lettuce).